A 333-amino-acid chain; its full sequence is 1,5-anhydro-D-fructose reductase (333 aa).

NADP(+) contacts are provided by residues alanine 9–isoleucine 12, serine 33–threonine 34, arginine 38, threonine 71–histidine 76, glutamate 93–lysine 94, asparagine 120, tryptophan 162–arginine 163, and tyrosine 283.

Monomer.

The enzyme catalyses 1,5-anhydro-D-mannitol + NADP(+) = 1,5-anhydro-D-fructose + NADPH + H(+). In terms of biological role, catalyzes the NADPH-specific reduction of 1,5-anhydro-D-fructose to 1,5-anhydro-D-mannitol. Also shows some activity against structurally related compounds such as 3-keto-1,5-anhydro-D-fructose, D-glucosone and D-xylosone. The enzyme cannot use NADH as cosubstrate. This Ensifer adhaerens (Sinorhizobium morelense) protein is 1,5-anhydro-D-fructose reductase (afr).